Here is a 424-residue protein sequence, read N- to C-terminus: uncharacterized protein (424 aa).

Belongs to the serpin family.

This is an uncharacterized protein from Methanosarcina acetivorans (strain ATCC 35395 / DSM 2834 / JCM 12185 / C2A).